A 203-amino-acid polypeptide reads, in one-letter code: Ras-like protein family member 10A (203 aa).

The small GTPase-like stretch occupies residues 1-203; sequence MGGSLRVAVL…ALHPARCSLM (203 aa). Residue 11–18 participates in GTP binding; sequence GAPGVGKT. Residues 33 to 42 carry the Effector region motif; the sequence is HRPTDGPRLY. GTP is bound by residues 59–62 and 129–132; these read DGDV and NKRD. Position 200 is a cysteine methyl ester (Cys-200). The S-farnesyl cysteine moiety is linked to residue Cys-200. A propeptide spans 201-203 (removed in mature form); the sequence is SLM.

It belongs to the small GTPase superfamily. Ras family. In terms of processing, isoprenylation is essential for nucleolar localization, and the proliferation-inhibiting activity of RASL10A. Expression appears to be strictly limited to the central nervous system.

It localises to the cell membrane. It is found in the nucleus. The protein resides in the nucleolus. The enzyme catalyses GTP + H2O = GDP + phosphate + H(+). Its function is as follows. Potent inhibitor of cellular proliferation. The chain is Ras-like protein family member 10A (RASL10A) from Homo sapiens (Human).